A 216-amino-acid polypeptide reads, in one-letter code: Cytidylate kinase (216 aa).

7 to 15 (GPSGTGKST) is a binding site for ATP.

It belongs to the cytidylate kinase family. Type 1 subfamily.

It localises to the cytoplasm. It catalyses the reaction CMP + ATP = CDP + ADP. It carries out the reaction dCMP + ATP = dCDP + ADP. The sequence is that of Cytidylate kinase from Chlamydia felis (strain Fe/C-56) (Chlamydophila felis).